Reading from the N-terminus, the 103-residue chain is Secreted LysM effector Mgx1LysM (103 aa).

A signal peptide spans 1–18; the sequence is MKVTTIIAALLSVAVVDA. Intrachain disulfides connect Cys31/Cys89 and Cys62/Cys97. The region spanning 37 to 85 is the LysM domain; sequence IPYVVKKGDTLTHIAHDIYKRKVGICDLAYTNHIGYNPDLIYEDQTLLI. Gly44, Thr48, Asp75, and Ile77 together coordinate chitin.

It belongs to the secreted LysM effector family. Forms homodimers in a chitin-independent manner through interactions at the N-termini of Mgx1LysM monomers. Homodimers are further polymerized in a chitin-dependent manner.

The protein resides in the secreted. The protein localises to the cell wall. Functionally, secreted effector that enables the plant pathogenic fungus to manipulate host defenses for successful infection. Binds chitin and suppresses the chitin-induced reactive oxygen species (ROS) burst. Chitin-induced polymerization of homodimers forms a contiguous Mg1LysM highly oligomeric super-complexe that is anchored to the chitin in the fungal cell wall to prevent hydrolysis by host chitinases. The chain is Secreted LysM effector Mgx1LysM from Zymoseptoria tritici (strain CBS 115943 / IPO323) (Speckled leaf blotch fungus).